Here is a 397-residue protein sequence, read N- to C-terminus: uncharacterized protein (397 aa).

Residues cysteine 8, cysteine 14, cysteine 17, and cysteine 95 each contribute to the [4Fe-4S] cluster site. S-adenosyl-L-methionine-binding residues include glutamine 229, tyrosine 258, glutamate 279, and aspartate 325. Cysteine 352 serves as the catalytic Nucleophile.

This sequence belongs to the class I-like SAM-binding methyltransferase superfamily. RNA M5U methyltransferase family.

This is an uncharacterized protein from Chlamydia muridarum (strain MoPn / Nigg).